We begin with the raw amino-acid sequence, 419 residues long: GTPase Obg (419 aa).

The Obg domain occupies 1-156 (MFIDKVNTYL…AEVNLELRLI (156 aa)). Residues 157–325 (ADVGLLGLPN…LLKEMLRMLE (169 aa)) form the OBG-type G domain. GTP contacts are provided by residues 163–170 (GLPNAGKS), 188–192 (FTTLA), 209–212 (DIPG), 279–282 (NKID), and 306–308 (SAA). Residues Ser170 and Thr190 each coordinate Mg(2+). One can recognise an OCT domain in the interval 342 to 419 (KKYIYEPEFK…IGDFEFTFEK (78 aa)).

This sequence belongs to the TRAFAC class OBG-HflX-like GTPase superfamily. OBG GTPase family. In terms of assembly, monomer. Mg(2+) serves as cofactor.

It is found in the cytoplasm. An essential GTPase which binds GTP, GDP and possibly (p)ppGpp with moderate affinity, with high nucleotide exchange rates and a fairly low GTP hydrolysis rate. Plays a role in control of the cell cycle, stress response, ribosome biogenesis and in those bacteria that undergo differentiation, in morphogenesis control. The chain is GTPase Obg from Endomicrobium trichonymphae.